The chain runs to 186 residues: Peptidyl-tRNA hydrolase (186 aa).

Tyr14 contacts tRNA. The active-site Proton acceptor is the His19. Positions 64, 66, and 112 each coordinate tRNA.

The protein belongs to the PTH family. In terms of assembly, monomer.

The protein localises to the cytoplasm. It catalyses the reaction an N-acyl-L-alpha-aminoacyl-tRNA + H2O = an N-acyl-L-amino acid + a tRNA + H(+). In terms of biological role, hydrolyzes ribosome-free peptidyl-tRNAs (with 1 or more amino acids incorporated), which drop off the ribosome during protein synthesis, or as a result of ribosome stalling. Its function is as follows. Catalyzes the release of premature peptidyl moieties from peptidyl-tRNA molecules trapped in stalled 50S ribosomal subunits, and thus maintains levels of free tRNAs and 50S ribosomes. This Listeria monocytogenes serotype 4b (strain CLIP80459) protein is Peptidyl-tRNA hydrolase.